The following is a 68-amino-acid chain: Defensin gallicin (68 aa).

The N-terminal stretch at 1-16 (MWIESDAGVAIDRHAR) is a signal peptide.

Post-translationally, contains 5 disulfide bonds. As to expression, expressed in hemolymph, gills, digestive gland, foot, adductor muscles and mantle.

It localises to the secreted. Its subcellular location is the target cell membrane. Shows antibacterial activity against numerous Gram-positive bacteria. It selectively inhibits peptidoglycan biosynthesis through complex formation with the cell wall precursor lipid II (1:1 molar ratio) thus inhibiting cell wall synthesis. The sequence is that of Defensin gallicin from Mytilus galloprovincialis (Mediterranean mussel).